The following is a 1185-amino-acid chain: MPVSLAVCETANVVNAALRESLGGGGGSGCVAAAAASGRSGSGSSSTAAAAASADEAKIGDPSATDNLQSQIVANAKRVLLAKIEYEEVENYHESVLAKLKSKYIVIKPDNSGAANCSYKTNGASTGKALSSNGHDNTNGVNGSSAATVNGNRKQTVEQSNQNSTTNPNELPKPKRVLYPRENIRIGWKQSDRKWQVGAGMLNVGNTCYLNSTLQALFHIPALANWLVSETAHVENCNISESCGSGGCIICAMAKTLQTTQSNQTAVRPFLIYTKLRQICKHMVVGRQEDAHEFLRFLVEAMEKAYLMRFRNYKELDQLVKETTPLSQIFGGYLRSEVRCLSCNHVSITFQHFQDLLLDIRKADTLEEAFDGYFSRERLEDMGYKCEGCKKKVSATKQFSLERAPITLCIQLKRFSMMGNKLTKQISFKPRIDLSRFAARSPAASTQPLSYRLVSMVTHLGVSQHCGHYTAIGLTESGSYYNFDDSYVRPIAMQSVCNTNAYIMFYELDVASSSINSSSSCSTSVPKLNGLRLNGQHSPSVATTAVAATATSTSASAVSPRFIGPQLPNGYANNNGHVLGAAKTSIQFKSSPQKQPQQQQHNGLLMGANKFQESAQSKHSLVGSLHKGETAANASANAISNANSNKSSCNNNTLTTNSQHQQQHILPISSDEEDEDEDSDDDVDVKANTAPQLPSMPKMFEDAESVAQTAKLKPKTPLKSLVPYESASEEEQEQQQQQQQLLVSPQLQPANPRKRRSGADSSESEDEPPSIMRNGHAKSNGSGNESSTSTSIKSNNNKQKTDAIDEIFKSLNNYKNKHRATAAGTTTADADEDEQQQQQVTKKPSNSSSSLISKNGWQSQNGKAPASPKTPPSPAVIKSKTGIWQITRTDDDNDDDDEDADEEDDADADAEQEEYDDEVVVVETTPSITTKNLNNPFASKPSSADAMPGAKRQKLLNGSAKSAQTPRVGNGYQSEATANGNAVSELLKQTHRGYGTSVLSWTGKTSDLDKQSFDLVCAKRIAGYGDMDGSVGVSSDSNINNSKNIDSNSNIKSLTAPTLLAEAREQRKRDAEDDEENEMDRGRQRKVKSASVKSNNGIPGYNPFQEFESQKRWNGNKSGSFPRFYQNYRQNFQQRNKFKYNRFGGGGAKFQQQRALQRHLAAGGGFTRRQHQSTGHQQQQQQQQS.

Residues T126 to N169 are compositionally biased toward polar residues. The tract at residues T126–P174 is disordered. A USP domain is found at A199–D509. Residue C208 is the Nucleophile of the active site. H468 acts as the Proton acceptor in catalysis. Residues S552 and S554 each carry the phosphoserine modification. Positions A642–S658 are enriched in low complexity. Disordered stretches follow at residues A642–I804, H818–E975, A1056–P1122, and N1136–S1185. A compositionally biased stretch (acidic residues) spans S670 to V683. T716 carries the post-translational modification Phosphothreonine. Phosphoserine is present on residues S726 and S728. Low complexity-rich tracts occupy residues K778 to N797 and Q836 to S853. S867 is modified (phosphoserine). At T870 the chain carries Phosphothreonine. Position 873 is a phosphoserine (S873). Positions D891–V920 are enriched in acidic residues. 2 stretches are compositionally biased toward polar residues: residues T924 to S942 and S959 to E975. A Phosphothreonine modification is found at T925. Basic and acidic residues predominate over residues E1062–A1071. Composition is skewed to low complexity over residues Q1151–A1161 and Q1172–S1185.

It belongs to the peptidase C19 family. Interacts with atms/PAF1, but not with CycT.

The protein resides in the nucleus. It is found in the nucleolus. It catalyses the reaction Thiol-dependent hydrolysis of ester, thioester, amide, peptide and isopeptide bonds formed by the C-terminal Gly of ubiquitin (a 76-residue protein attached to proteins as an intracellular targeting signal).. Required for maintaining multiple types of adult stem cells, including male and female germline, epithelial follicle cell and intestinal stem cells. May function as a transcriptional repressor by continually deubiquiting histone H2B at the promoters of genes critical for cellular differentiation, thereby preventing histone H3 'Lys-4' trimethylation (H3K4). Controls selective autophagy activation by ubiquitinated proteins. The sequence is that of Ubiquitin carboxyl-terminal hydrolase 36 (Usp36) from Drosophila mojavensis (Fruit fly).